An 812-amino-acid chain; its full sequence is cAMP-regulated phosphoprotein 21 (812 aa).

Positions 1-130 (MSEQGDLNQA…KDKTSEKPKI (130 aa)) are disordered. Position 2 is an N-acetylserine (serine 2). Low complexity predominate over residues 9 to 25 (QAIAEEGGTEQETATPE). A coiled-coil region spans residues 32-58 (ESLDEEEKLELQRRLEAQNQERRKSKS). At serine 33 the chain carries Phosphoserine. Over residues 40-53 (LELQRRLEAQNQER) the composition is skewed to basic and acidic residues. Serine 56 is subject to Phosphoserine. The segment covering 90–100 (IHLQLSSFSSL) has biased composition (low complexity). Basic and acidic residues predominate over residues 102 to 130 (EEDKSRKDDSEREKEKDKNKDKTSEKPKI). Phosphoserine is present on serine 134. An R3H domain is found at 164–227 (RMILLKMEQE…SVIINKTSST (64 aa)). The 73-residue stretch at 228 to 300 (RIPEQRFCEH…VRERIFAHDS (73 aa)) folds into the SUZ domain. The tract at residues 246–281 (SQKRFILKRDNSSIDKEDNQQNRMHPFRDDRRSKSI) is disordered. Phosphoserine is present on serine 300. Disordered stretches follow at residues 332–436 (RGNR…PLVS), 485–544 (HTGQ…MAGP), and 561–632 (LSRQ…QQPP). Over residues 339–349 (GRTSGSRQSSS) the composition is skewed to low complexity. Positions 351–360 (NELKWSDHQR) are enriched in basic and acidic residues. Residues 361-373 (AWSSTDSDSSNRN) show a composition bias toward polar residues. Phosphoserine occurs at positions 363 and 383. Residues 391–423 (TRGDSTSSTRSTGKLSKAGSESSSSAGSSGSLS) show a composition bias toward low complexity. At serine 562 the chain carries Phosphoserine. A compositionally biased stretch (polar residues) spans 582–602 (LMPQPAQQPSYVIASTGQQLP). Pro residues predominate over residues 619-632 (QPPPSPQGFVQQPP). An Asymmetric dimethylarginine modification is found at arginine 655.

As to quaternary structure, interacts with CALM1. Phosphorylation at Ser-56 favors interaction with CALM1. In terms of processing, isoform 1 is methylated by CARM1 at Arg-655 in immature thymocytes. As to expression, isoform 2 is expressed in brain. Isoform 1 is present in immature thymocytes (at protein level).

The protein resides in the cytoplasm. Isoform 2 may act as a competitive inhibitor of calmodulin-dependent enzymes such as calcineurin in neurons. This chain is cAMP-regulated phosphoprotein 21 (ARPP21), found in Homo sapiens (Human).